A 149-amino-acid polypeptide reads, in one-letter code: MAAKVEPFWIRKTLDQLDHEEWESLCDGCGLCCLQKLEDEEDNSVYYTRIACKLLDLKTCQCSDYPNRMKFVPDCIQLTPGQAEEFKWLPPTCGYRLVSEGKDLPLWHHLVCGDRDAVHHERISQSGRMLAEGSVPEDDWEDHLIFRAG.

The protein belongs to the UPF0260 family.

This Pseudomonas fluorescens (strain Pf0-1) protein is UPF0260 protein Pfl01_1392.